The following is a 69-amino-acid chain: Conotoxin AbVIF (69 aa).

An N-terminal signal peptide occupies residues 1-17 (VLIIAVLFLTACQLTTA). Residues 18–40 (ETSSRGKQKHRALRSTDKNSRMS) constitute a propeptide that is removed on maturation. The tract at residues 20–41 (SSRGKQKHRALRSTDKNSRMSK) is disordered. 3 disulfides stabilise this stretch: C43–C57, C50–C61, and C56–C68.

The protein belongs to the conotoxin O1 superfamily. In terms of tissue distribution, expressed by the venom duct.

It is found in the secreted. The polypeptide is Conotoxin AbVIF (Conus abbreviatus (Abbreviated cone)).